The primary structure comprises 654 residues: Tumor necrosis factor alpha-induced protein 2 (654 aa).

Disordered regions lie at residues Met-1–Lys-38 and Gly-50–Thr-78. Basic residues predominate over residues Lys-28 to Lys-38.

This sequence belongs to the SEC6 family.

May play a role as a mediator of inflammation and angiogenesis. This is Tumor necrosis factor alpha-induced protein 2 (TNFAIP2) from Homo sapiens (Human).